A 385-amino-acid chain; its full sequence is Elongation factor Ts, mitochondrial (385 aa).

A mitochondrion-targeting transit peptide spans 1–50 (MAWSQSARKPMIGLLFRAQQHGARGYSYSAFQAHLSSSNVDQSATLLRRF).

The protein belongs to the EF-Ts family.

It localises to the mitochondrion. Associates with the EF-Tu.GDP complex and induces the exchange of GDP to GTP. It remains bound to the aminoacyl-tRNA.EF-Tu.GTP complex up to the GTP hydrolysis stage on the ribosome. In Oryza sativa subsp. indica (Rice), this protein is Elongation factor Ts, mitochondrial.